A 98-amino-acid chain; its full sequence is Large ribosomal subunit protein uL23 (98 aa).

Belongs to the universal ribosomal protein uL23 family. As to quaternary structure, part of the 50S ribosomal subunit. Contacts protein L29, and trigger factor when it is bound to the ribosome.

Its function is as follows. One of the early assembly proteins it binds 23S rRNA. One of the proteins that surrounds the polypeptide exit tunnel on the outside of the ribosome. Forms the main docking site for trigger factor binding to the ribosome. The protein is Large ribosomal subunit protein uL23 of Teredinibacter turnerae (strain ATCC 39867 / T7901).